The primary structure comprises 237 residues: Phosphoribosylaminoimidazole-succinocarboxamide synthase (237 aa).

The protein belongs to the SAICAR synthetase family.

It carries out the reaction 5-amino-1-(5-phospho-D-ribosyl)imidazole-4-carboxylate + L-aspartate + ATP = (2S)-2-[5-amino-1-(5-phospho-beta-D-ribosyl)imidazole-4-carboxamido]succinate + ADP + phosphate + 2 H(+). The protein operates within purine metabolism; IMP biosynthesis via de novo pathway; 5-amino-1-(5-phospho-D-ribosyl)imidazole-4-carboxamide from 5-amino-1-(5-phospho-D-ribosyl)imidazole-4-carboxylate: step 1/2. The polypeptide is Phosphoribosylaminoimidazole-succinocarboxamide synthase (Halalkalibacterium halodurans (strain ATCC BAA-125 / DSM 18197 / FERM 7344 / JCM 9153 / C-125) (Bacillus halodurans)).